Consider the following 59-residue polypeptide: Large ribosomal subunit protein uL30 (59 aa).

The protein belongs to the universal ribosomal protein uL30 family. In terms of assembly, part of the 50S ribosomal subunit.

This chain is Large ribosomal subunit protein uL30, found in Pelotomaculum thermopropionicum (strain DSM 13744 / JCM 10971 / SI).